A 284-amino-acid polypeptide reads, in one-letter code: Nucleotide-binding protein SO_3964 (284 aa).

Residue 8-15 (GRSGSGKS) coordinates ATP. GTP is bound at residue 56–59 (DVRN).

Belongs to the RapZ-like family.

Its function is as follows. Displays ATPase and GTPase activities. The protein is Nucleotide-binding protein SO_3964 of Shewanella oneidensis (strain ATCC 700550 / JCM 31522 / CIP 106686 / LMG 19005 / NCIMB 14063 / MR-1).